The following is a 48-amino-acid chain: Large ribosomal subunit protein bL33A (48 aa).

It belongs to the bacterial ribosomal protein bL33 family.

The protein is Large ribosomal subunit protein bL33A of Limosilactobacillus fermentum (strain NBRC 3956 / LMG 18251) (Lactobacillus fermentum).